A 386-amino-acid chain; its full sequence is S-adenosylmethionine synthase (386 aa).

Residue His-16 participates in ATP binding. Residue Asp-18 participates in Mg(2+) binding. Glu-44 contributes to the K(+) binding site. Residues Glu-57 and Gln-100 each coordinate L-methionine. Residues Gln-100–Gln-110 are flexible loop. ATP contacts are provided by residues Asp-164–Lys-166, Arg-231–Phe-232, Asp-240, Arg-246–Lys-247, Ala-263, and Lys-267. Position 240 (Asp-240) interacts with L-methionine. Lys-271 contributes to the L-methionine binding site.

The protein belongs to the AdoMet synthase family. In terms of assembly, homotetramer; dimer of dimers. The cofactor is Mg(2+). K(+) is required as a cofactor.

It localises to the cytoplasm. The enzyme catalyses L-methionine + ATP + H2O = S-adenosyl-L-methionine + phosphate + diphosphate. Its pathway is amino-acid biosynthesis; S-adenosyl-L-methionine biosynthesis; S-adenosyl-L-methionine from L-methionine: step 1/1. Its function is as follows. Catalyzes the formation of S-adenosylmethionine (AdoMet) from methionine and ATP. The overall synthetic reaction is composed of two sequential steps, AdoMet formation and the subsequent tripolyphosphate hydrolysis which occurs prior to release of AdoMet from the enzyme. This chain is S-adenosylmethionine synthase, found in Sulfurovum sp. (strain NBC37-1).